The chain runs to 157 residues: ATP synthase subunit b 1 (157 aa).

The helical transmembrane segment at leucine 7–leucine 29 threads the bilayer.

The protein belongs to the ATPase B chain family. F-type ATPases have 2 components, F(1) - the catalytic core - and F(0) - the membrane proton channel. F(1) has five subunits: alpha(3), beta(3), gamma(1), delta(1), epsilon(1). F(0) has three main subunits: a(1), b(2) and c(10-14). The alpha and beta chains form an alternating ring which encloses part of the gamma chain. F(1) is attached to F(0) by a central stalk formed by the gamma and epsilon chains, while a peripheral stalk is formed by the delta and b chains.

The protein resides in the cell inner membrane. Functionally, f(1)F(0) ATP synthase produces ATP from ADP in the presence of a proton or sodium gradient. F-type ATPases consist of two structural domains, F(1) containing the extramembraneous catalytic core and F(0) containing the membrane proton channel, linked together by a central stalk and a peripheral stalk. During catalysis, ATP synthesis in the catalytic domain of F(1) is coupled via a rotary mechanism of the central stalk subunits to proton translocation. Its function is as follows. Component of the F(0) channel, it forms part of the peripheral stalk, linking F(1) to F(0). The chain is ATP synthase subunit b 1 from Methylococcus capsulatus (strain ATCC 33009 / NCIMB 11132 / Bath).